The following is a 91-amino-acid chain: Putative transmembrane protein encoded by LINC00862 (91 aa).

Residues 49 to 69 traverse the membrane as a helical segment; the sequence is IMALILMPSLHCFGNILILLF.

The protein resides in the membrane. This chain is Putative transmembrane protein encoded by LINC00862 (LINC00862), found in Homo sapiens (Human).